The primary structure comprises 258 residues: 4-hydroxy-tetrahydrodipicolinate reductase (258 aa).

Residue 10–15 coordinates NAD(+); that stretch reads GCLGRM. Lysine 38 is a binding site for NADP(+). NAD(+)-binding positions include 89–91 and 113–116; these read GTT and AGNM. The active-site Proton donor/acceptor is histidine 146. Residue histidine 147 coordinates (S)-2,3,4,5-tetrahydrodipicolinate. Lysine 150 functions as the Proton donor in the catalytic mechanism. 156–157 contributes to the (S)-2,3,4,5-tetrahydrodipicolinate binding site; it reads GT.

Belongs to the DapB family.

The protein localises to the cytoplasm. It carries out the reaction (S)-2,3,4,5-tetrahydrodipicolinate + NAD(+) + H2O = (2S,4S)-4-hydroxy-2,3,4,5-tetrahydrodipicolinate + NADH + H(+). The enzyme catalyses (S)-2,3,4,5-tetrahydrodipicolinate + NADP(+) + H2O = (2S,4S)-4-hydroxy-2,3,4,5-tetrahydrodipicolinate + NADPH + H(+). The protein operates within amino-acid biosynthesis; L-lysine biosynthesis via DAP pathway; (S)-tetrahydrodipicolinate from L-aspartate: step 4/4. Functionally, catalyzes the conversion of 4-hydroxy-tetrahydrodipicolinate (HTPA) to tetrahydrodipicolinate. The sequence is that of 4-hydroxy-tetrahydrodipicolinate reductase from Pelagibacter ubique (strain HTCC1062).